Reading from the N-terminus, the 557-residue chain is Trigger factor (557 aa).

The PPIase FKBP-type domain occupies 169-255; sequence GDVVVIDFQA…LKEIKTKELP (87 aa). Residues 438 to 557 are disordered; it reads WVDSEGNPTE…KAGKKSKKDK (120 aa). Residues 455–466 are compositionally biased toward basic and acidic residues; sequence SEGEDRQERSES.

This sequence belongs to the FKBP-type PPIase family. Tig subfamily.

It is found in the cytoplasm. It catalyses the reaction [protein]-peptidylproline (omega=180) = [protein]-peptidylproline (omega=0). Functionally, involved in protein export. Acts as a chaperone by maintaining the newly synthesized protein in an open conformation. Functions as a peptidyl-prolyl cis-trans isomerase. The polypeptide is Trigger factor (Synechococcus sp. (strain JA-3-3Ab) (Cyanobacteria bacterium Yellowstone A-Prime)).